The chain runs to 292 residues: Probable ABC transporter permease protein YurN (292 aa).

6 consecutive transmembrane segments (helical) span residues 7–27 (IIPY…YIPI), 70–90 (VLYA…LAAV), 106–126 (VFFL…DFIY), 160–180 (VIFV…IVSI), 215–235 (FVAV…PYIL), and 260–280 (MMGY…ALSL). Positions 66 to 282 (LTNNVLYAVI…IITLALSLMQ (217 aa)) constitute an ABC transmembrane type-1 domain.

It belongs to the binding-protein-dependent transport system permease family. MalFG subfamily.

Its subcellular location is the cell membrane. In terms of biological role, probably part of the binding-protein-dependent transport system YurMNO. Probably responsible for the translocation of the substrate across the membrane. In Bacillus subtilis (strain 168), this protein is Probable ABC transporter permease protein YurN (yurN).